The sequence spans 528 residues: Peptide chain release factor 3 (528 aa).

A tr-type G domain is found at 11–279 (SDRRTFAIIS…GFVEWAPAPI (269 aa)). GTP is bound by residues 20–27 (SHPDAGKT), 88–92 (DTPGH), and 142–145 (NKMD).

This sequence belongs to the TRAFAC class translation factor GTPase superfamily. Classic translation factor GTPase family. PrfC subfamily.

It is found in the cytoplasm. In terms of biological role, increases the formation of ribosomal termination complexes and stimulates activities of RF-1 and RF-2. It binds guanine nucleotides and has strong preference for UGA stop codons. It may interact directly with the ribosome. The stimulation of RF-1 and RF-2 is significantly reduced by GTP and GDP, but not by GMP. The protein is Peptide chain release factor 3 of Marinomonas sp. (strain MWYL1).